Consider the following 141-residue polypeptide: Hemoglobin subunit alpha (141 aa).

Residues 1 to 141 (VLSEADKSNV…VSTVLTSKYR (141 aa)) enclose the Globin domain. H58 serves as a coordination point for O2. H87 is a binding site for heme b.

The protein belongs to the globin family. In terms of assembly, heterotetramer of two alpha chains and two beta chains. When oxygenated in vitro, exists virtually only in polymeric form. When deoxygenated, forms tetramers, octamers and larger polymers. Red blood cells.

Involved in oxygen transport from the lung to the various peripheral tissues. This chain is Hemoglobin subunit alpha, found in Paleosuchus palpebrosus (Cuvier's smooth-fronted caiman).